The primary structure comprises 361 residues: Peptide chain release factor 1 (361 aa).

Glutamine 235 carries the post-translational modification N5-methylglutamine. A disordered region spans residues 288–307 (AAEAQTRKLQVGSGDRSQRI).

The protein belongs to the prokaryotic/mitochondrial release factor family. Post-translationally, methylated by PrmC. Methylation increases the termination efficiency of RF1.

Its subcellular location is the cytoplasm. In terms of biological role, peptide chain release factor 1 directs the termination of translation in response to the peptide chain termination codons UAG and UAA. This is Peptide chain release factor 1 from Xanthomonas axonopodis pv. citri (strain 306).